Reading from the N-terminus, the 484-residue chain is Protein nucleotidyltransferase YdiU (484 aa).

Gly81, Gly83, Arg84, Lys103, Asp115, Gly116, Arg166, and Arg173 together coordinate ATP. Asp244 serves as the catalytic Proton acceptor. Mg(2+) is bound by residues Asn245 and Asp254. Residue Asp254 participates in ATP binding.

The protein belongs to the SELO family. Mg(2+) is required as a cofactor. Requires Mn(2+) as cofactor.

The enzyme catalyses L-seryl-[protein] + ATP = 3-O-(5'-adenylyl)-L-seryl-[protein] + diphosphate. It carries out the reaction L-threonyl-[protein] + ATP = 3-O-(5'-adenylyl)-L-threonyl-[protein] + diphosphate. The catalysed reaction is L-tyrosyl-[protein] + ATP = O-(5'-adenylyl)-L-tyrosyl-[protein] + diphosphate. It catalyses the reaction L-histidyl-[protein] + UTP = N(tele)-(5'-uridylyl)-L-histidyl-[protein] + diphosphate. The enzyme catalyses L-seryl-[protein] + UTP = O-(5'-uridylyl)-L-seryl-[protein] + diphosphate. It carries out the reaction L-tyrosyl-[protein] + UTP = O-(5'-uridylyl)-L-tyrosyl-[protein] + diphosphate. Nucleotidyltransferase involved in the post-translational modification of proteins. It can catalyze the addition of adenosine monophosphate (AMP) or uridine monophosphate (UMP) to a protein, resulting in modifications known as AMPylation and UMPylation. This is Protein nucleotidyltransferase YdiU from Shewanella baltica (strain OS223).